The sequence spans 221 residues: GTP-binding nuclear protein Ran-2 (221 aa).

Residues 10 to 174 (DYPSFKLVIV…LYLARKLAGD (165 aa)) enclose the Small GTPase Ran-type domain. Position 21 to 28 (21 to 28 (DGGTGKTT)) interacts with GTP. Residues 40–48 (KKYEPTIGV) are switch-I. GTP is bound by residues G71, 125–128 (NKVD), and 153–155 (SAK). Residues 71 to 87 (GQEKFGGLRDGYYIHGQ) are switch-II.

This sequence belongs to the small GTPase superfamily. Ran family. As to quaternary structure, found in a nuclear export complex with RanGTP, exportin and pre-miRNA.

The protein localises to the nucleus. Functionally, GTP-binding protein involved in nucleocytoplasmic transport. Required for the import of protein into the nucleus and also for RNA export. Involved in chromatin condensation and control of cell cycle. This is GTP-binding nuclear protein Ran-2 (RAN2) from Oryza sativa subsp. indica (Rice).